Reading from the N-terminus, the 177-residue chain is Small ribosomal subunit protein uS5 (177 aa).

Residues 19-82 (FIEKLVAIKR…DQAQKQMIKV (64 aa)) enclose the S5 DRBM domain.

The protein belongs to the universal ribosomal protein uS5 family. As to quaternary structure, part of the 30S ribosomal subunit. Contacts proteins S4 and S8.

Functionally, with S4 and S12 plays an important role in translational accuracy. Its function is as follows. Located at the back of the 30S subunit body where it stabilizes the conformation of the head with respect to the body. The polypeptide is Small ribosomal subunit protein uS5 (Magnetococcus marinus (strain ATCC BAA-1437 / JCM 17883 / MC-1)).